Here is a 294-residue protein sequence, read N- to C-terminus: G-protein coupled receptor homolog U51 (294 aa).

Topologically, residues 1–14 are extracellular; sequence MKNIDLTNWKLLAE. The chain crosses the membrane as a helical span at residues 15-35; it reads IYEYLFFFSFFFLCLLVIIVV. At 36-47 the chain is on the cytoplasmic side; sequence KFNNSTVGREYT. Residues 48 to 68 traverse the membrane as a helical segment; the sequence is FSTFSGMLVYILLLPVKMGML. The Extracellular segment spans residues 69-79; that stretch reads TKMWDVSTDYC. Residues 80–102 traverse the membrane as a helical segment; it reads IILMFLSDFSFIFSSWALTLLAL. Topologically, residues 103–119 are cytoplasmic; the sequence is ERINNFSFSEIKVNETK. The helical transmembrane segment at 120 to 140 threads the bilayer; that stretch reads ILKQMSFPIIWVTSIFQAVQI. Residues 141–166 lie on the Extracellular side of the membrane; it reads SMKYKKSQMNLEDDYCLLAIERSAEE. A helical membrane pass occupies residues 167 to 187; the sequence is AWILLMYTVVIPTFIVFFYVL. The Cytoplasmic portion of the chain corresponds to 188 to 200; it reads NKRFLFLERDLNS. A helical transmembrane segment spans residues 201 to 221; sequence IVTHLSLFLFFGALCFFPASV. The Extracellular segment spans residues 222-236; that stretch reads LNEFNCNRLFYGLHE. Residues 237–257 traverse the membrane as a helical segment; sequence LLIVCLELKIFYVPTMTYIIS. The Cytoplasmic portion of the chain corresponds to 258 to 294; the sequence is CENYRLAAKAFFCKCFKPCFLMPSLRKLQQPTKSTQF.

This sequence belongs to the G-protein coupled receptor 1 family.

It localises to the host cell membrane. This chain is G-protein coupled receptor homolog U51 (U51), found in Human herpesvirus 7 (strain JI) (HHV-7).